Here is a 37-residue protein sequence, read N- to C-terminus: Neuropeptide Y1-like conopeptide (37 aa).

A Phenylalanine amide modification is found at F37.

This sequence belongs to the NPY family. As to expression, expressed by the venom duct.

Its subcellular location is the secreted. In terms of biological role, causes hyperactivity such as jumping, rapid circling and tail flicking, when intraventricularly injected into mice brain. This is Neuropeptide Y1-like conopeptide from Conus betulinus (Beech cone).